Here is a 302-residue protein sequence, read N- to C-terminus: Deoxyhypusine hydroxylase (302 aa).

Methionine 1 bears the N-acetylmethionine mark. HEAT-like PBS-type repeat units lie at residues 54–80 (LKHELAYCLGQMRDPRAIPVLVSVLQD), 87–113 (VRHEAGEALGAIGNPKVLGLLKQYSTD), 175–201 (ERYRAMFALRNVGGKEAALALAEGLKC), 206–232 (FRHEVGYVLGQLQHEAAVSELAATLAR), and 239–265 (VRHECAEALGAIARPACLAALREYITD). 3 residues coordinate Fe cation: histidine 56, histidine 89, and glutamate 90. Fe cation contacts are provided by histidine 208, histidine 241, and glutamate 242.

This sequence belongs to the deoxyhypusine hydroxylase family. Fe(2+) is required as a cofactor.

The enzyme catalyses [eIF5A protein]-deoxyhypusine + AH2 + O2 = [eIF5A protein]-hypusine + A + H2O. The protein operates within protein modification; eIF5A hypusination. Catalyzes the hydroxylation of the N(6)-(4-aminobutyl)-L-lysine intermediate produced by deoxyhypusine synthase/DHPS on a critical lysine of the eukaryotic translation initiation factor 5A/eIF-5A. This is the second step of the post-translational modification of that lysine into an unusual amino acid residue named hypusine. Hypusination is unique to mature eIF-5A factor and is essential for its function. The sequence is that of Deoxyhypusine hydroxylase (Dohh) from Rattus norvegicus (Rat).